The sequence spans 352 residues: Ni-sirohydrochlorin a,c-diamide reductive cyclase complex, component CfbD (352 aa).

The protein belongs to the NifD/NifK/NifE/NifN family. In terms of assembly, homodimer or monomer. The Ni-sirohydrochlorin a,c-diamide reductive cyclase complex is composed of a NifH homolog component CfbC and a NifD homolog component CfbD. The cofactor is [4Fe-4S] cluster.

It carries out the reaction Ni-sirohydrochlorin a,c-diamide + 3 AH2 + ATP + H2O = 15,17(3)-seco-F430-17(3)-acid + 3 A + ADP + phosphate. Functionally, involved in the biosynthesis of the unique nickel-containing tetrapyrrole coenzyme F430, the prosthetic group of methyl-coenzyme M reductase (MCR), which plays a key role in methanogenesis and anaerobic methane oxidation. Catalyzes both the six-electron reduction of the tetrahydroporphyrin ring system and the gamma-lactamization of the c-acetamide side chain of Ni-sirohydrochlorin a,c-diamide to yield 15,17(3)-seco-F430-17(3)-acid (seco-F430), the last intermediate in the biosynthesis of the coenzyme F430. This Methanocaldococcus jannaschii (strain ATCC 43067 / DSM 2661 / JAL-1 / JCM 10045 / NBRC 100440) (Methanococcus jannaschii) protein is Ni-sirohydrochlorin a,c-diamide reductive cyclase complex, component CfbD.